A 132-amino-acid chain; its full sequence is Small ribosomal subunit protein uS11 (132 aa).

This sequence belongs to the universal ribosomal protein uS11 family. Part of the 30S ribosomal subunit.

In terms of biological role, located on the platform of the 30S subunit. This Sulfurisphaera tokodaii (strain DSM 16993 / JCM 10545 / NBRC 100140 / 7) (Sulfolobus tokodaii) protein is Small ribosomal subunit protein uS11.